A 196-amino-acid chain; its full sequence is Putative acetyltransferase YJL218W (196 aa).

Asn-84 contacts acetyl-CoA. The Proton donor/acceptor role is filled by His-114. Acetyl-CoA contacts are provided by residues Gly-141, Ala-159, 164–165 (IR), Lys-179, and Arg-182.

It belongs to the transferase hexapeptide repeat family. Homodimer.

The sequence is that of Putative acetyltransferase YJL218W from Saccharomyces cerevisiae (strain ATCC 204508 / S288c) (Baker's yeast).